The primary structure comprises 261 residues: Transmembrane protein 106A (261 aa).

The span at 1–10 (MGKAFSQLTS) shows a compositional bias: polar residues. Positions 1-22 (MGKAFSQLTSQKDEDKSILPDN) are disordered. Residues 93-113 (LSVFLAVTICLLIFSLTIFFL) traverse the membrane as a helical segment.

This sequence belongs to the TMEM106 family.

It localises to the cell membrane. Activates macrophages and polarizes them into M1-like macrophages through the activation of the MAPK and NF-kappaB signaling pathway. Upon activation, up-regulates the expression of CD80, CD86, CD69 and MHC II on macrophages, and induces the release of pro-inflammatory cytokines such as TNF, IL1B, IL6, CCL2 and nitric oxide. May play a role in inhibition of proliferation and migration. This is Transmembrane protein 106A (Tmem106a) from Rattus norvegicus (Rat).